A 520-amino-acid polypeptide reads, in one-letter code: Translation initiation factor IF3-1, mitochondrial (520 aa).

The N-terminal 66 residues, 1-66 (MAIWRIINRS…SNIFQNLRFL (66 aa)), are a transit peptide targeting the mitochondrion. Over residues 271 to 282 (ARVKEESPKPDS) the composition is skewed to basic and acidic residues. The segment at 271-520 (ARVKEESPKP…YGIFSTPKTK (250 aa)) is disordered. Polar residues predominate over residues 336-361 (EPQSPNQHVNPQRPRFSNQAPNQQPT). Residues 369–379 (PNQPPSAPRPQ) are compositionally biased toward pro residues. Composition is skewed to polar residues over residues 404–422 (NQAP…FPNQ) and 458–468 (FQNQAPNQQPT). Residues 473–485 (PQPPNPPRAPPRP) are compositionally biased toward pro residues.

This sequence belongs to the IF-3 family. As to quaternary structure, monomer.

The protein localises to the mitochondrion. Functionally, IF-3 binds to the 30S ribosomal subunit and shifts the equilibrium between 70S ribosomes and their 50S and 30S subunits in favor of the free subunits, thus enhancing the availability of 30S subunits on which protein synthesis initiation begins. The polypeptide is Translation initiation factor IF3-1, mitochondrial (Arabidopsis thaliana (Mouse-ear cress)).